The following is a 136-amino-acid chain: Ribosome-binding factor A (136 aa).

Belongs to the RbfA family. As to quaternary structure, monomer. Binds 30S ribosomal subunits, but not 50S ribosomal subunits or 70S ribosomes.

It localises to the cytoplasm. Functionally, one of several proteins that assist in the late maturation steps of the functional core of the 30S ribosomal subunit. Associates with free 30S ribosomal subunits (but not with 30S subunits that are part of 70S ribosomes or polysomes). Required for efficient processing of 16S rRNA. May interact with the 5'-terminal helix region of 16S rRNA. This is Ribosome-binding factor A from Photorhabdus laumondii subsp. laumondii (strain DSM 15139 / CIP 105565 / TT01) (Photorhabdus luminescens subsp. laumondii).